The following is a 256-amino-acid chain: uncharacterized protein (256 aa).

29–36 (GDDHSGKT) is an ATP binding site.

This is an uncharacterized protein from Saccharomyces cerevisiae (strain ATCC 204508 / S288c) (Baker's yeast).